The sequence spans 92 residues: Putative lambdoid prophage defective integrase (92 aa).

The protein belongs to the 'phage' integrase family.

The polypeptide is Putative lambdoid prophage defective integrase (intG) (Escherichia coli O157:H7).